Reading from the N-terminus, the 249-residue chain is Triosephosphate isomerase (249 aa).

8–10 (NWK) is a substrate binding site. Catalysis depends on histidine 95, which acts as the Electrophile. Glutamate 163 (proton acceptor) is an active-site residue. Substrate-binding residues include glycine 169 and serine 209.

Belongs to the triosephosphate isomerase family. Homodimer.

It is found in the cytoplasm. The catalysed reaction is D-glyceraldehyde 3-phosphate = dihydroxyacetone phosphate. Its pathway is carbohydrate biosynthesis; gluconeogenesis. It participates in carbohydrate degradation; glycolysis; D-glyceraldehyde 3-phosphate from glycerone phosphate: step 1/1. Functionally, involved in the gluconeogenesis. Catalyzes stereospecifically the conversion of dihydroxyacetone phosphate (DHAP) to D-glyceraldehyde-3-phosphate (G3P). This is Triosephosphate isomerase from Orientia tsutsugamushi (strain Ikeda) (Rickettsia tsutsugamushi).